The chain runs to 205 residues: Cbp/p300-interacting transactivator 3 (205 aa).

It belongs to the CITED family.

Its subcellular location is the nucleus. In terms of biological role, acts as a transcriptional coactivator. Enhances estrogen-dependent transactivation mediated by estrogen receptors. The sequence is that of Cbp/p300-interacting transactivator 3 (CITED3) from Gallus gallus (Chicken).